We begin with the raw amino-acid sequence, 260 residues long: Tetraspanin-14 (260 aa).

Residues 1–10 (MKSQSHKPWN) are Cytoplasmic-facing. A helical membrane pass occupies residues 11-31 (LVAGIFFPIITFFLSAPLVGH). Residues 32-54 (ALYLFCMRNDHVYYRDFQSTLPR) lie on the Extracellular side of the membrane. The chain crosses the membrane as a helical span at residues 55–75 (VQTLVSVSLLALFLLSNIGMF). Residues 76-80 (LRPRR) lie on the Cytoplasmic side of the membrane. The chain crosses the membrane as a helical span at residues 81 to 101 (LSYFLVIVFFIGFAYSGVYKM). The Extracellular portion of the chain corresponds to 102 to 260 (ESRRFSPTPM…FLSSLTSLFR (159 aa)). N182 carries an N-linked (GlcNAc...) asparagine glycan.

It belongs to the tetraspanin (TM4SF) family.

The protein resides in the membrane. May be involved in the regulation of cell differentiation. The protein is Tetraspanin-14 (TET14) of Arabidopsis thaliana (Mouse-ear cress).